Here is a 197-residue protein sequence, read N- to C-terminus: Probable inosine/xanthosine triphosphatase (197 aa).

Position 9–14 (9–14 (TSNPIK)) interacts with substrate. 2 residues coordinate Mg(2+): aspartate 36 and aspartate 65.

The protein belongs to the YjjX NTPase family. Homodimer. The cofactor is Mg(2+). Mn(2+) serves as cofactor.

It catalyses the reaction XTP + H2O = XDP + phosphate + H(+). The enzyme catalyses ITP + H2O = IDP + phosphate + H(+). Functionally, phosphatase that hydrolyzes non-canonical purine nucleotides such as XTP and ITP to their respective diphosphate derivatives. Probably excludes non-canonical purines from DNA/RNA precursor pool, thus preventing their incorporation into DNA/RNA and avoiding chromosomal lesions. This chain is Probable inosine/xanthosine triphosphatase, found in Aeropyrum pernix (strain ATCC 700893 / DSM 11879 / JCM 9820 / NBRC 100138 / K1).